Here is a 605-residue protein sequence, read N- to C-terminus: Ankyrin repeat domain-containing protein 13D (605 aa).

2 UIM domains span residues 482–501 and 528–547; these read EDDDLLQFAIQQSLLEAGTE and EEQLQLEQALQESLQLSTES. A compositionally biased stretch (low complexity) spans 538–554; it reads QESLQLSTESRGPESPQ. The segment at 538–605 is disordered; that stretch reads QESLQLSTES…RILQLSLTEH (68 aa). Ser552 carries the post-translational modification Phosphoserine. The residue at position 556 (Thr556) is a Phosphothreonine. Over residues 564–575 the composition is skewed to low complexity; sequence SFEEQLRLALEL. UIM domains are found at residues 564 to 583 and 589 to 605; these read SFEEQLRLALELSSREQEEL and QEEDDLQRILQLSLTEH. Over residues 576 to 589 the composition is skewed to basic and acidic residues; sequence SSREQEELERRGQQ.

As to quaternary structure, interacts with EGFR (ubiquitinated); the interaction is direct and may regulate EGFR internalization.

The protein resides in the cell membrane. It is found in the late endosome. In terms of biological role, ubiquitin-binding protein that specifically recognizes and binds 'Lys-63'-linked ubiquitin. Does not bind 'Lys-48'-linked ubiquitin. Positively regulates the internalization of ligand-activated EGFR by binding to the Ub moiety of ubiquitinated EGFR at the cell membrane. This Mus musculus (Mouse) protein is Ankyrin repeat domain-containing protein 13D (Ankrd13d).